The following is a 222-amino-acid chain: (4-{4-[2-(gamma-L-glutamylamino)ethyl]phenoxymethyl}furan-2-yl)methanamine synthase (222 aa).

This sequence belongs to the MfnF family.

It catalyses the reaction gamma-L-glutamyltyramine + [5-(aminomethyl)furan-3-yl]methyl diphosphate = (4-{4-[2-(gamma-L-glutamylamino)ethyl]phenoxymethyl}furan-2-yl)methanamine + diphosphate. It functions in the pathway cofactor biosynthesis; methanofuran biosynthesis. In terms of biological role, catalyzes the condensation between 5-(aminomethyl)-3-furanmethanol diphosphate (F1-PP) and gamma-glutamyltyramine to produce APMF-Glu. In Methanococcus vannielii, this protein is (4-{4-[2-(gamma-L-glutamylamino)ethyl]phenoxymethyl}furan-2-yl)methanamine synthase.